We begin with the raw amino-acid sequence, 343 residues long: Glucokinase (343 aa).

Position 18–23 (18–23) interacts with ATP; the sequence is GDIGGT.

It belongs to the bacterial glucokinase family.

Its subcellular location is the cytoplasm. It carries out the reaction D-glucose + ATP = D-glucose 6-phosphate + ADP + H(+). This chain is Glucokinase, found in Brucella suis biovar 1 (strain 1330).